The primary structure comprises 438 residues: Putative B3 domain-containing protein Os04g0676650 (438 aa).

Over residues 1 to 11 (MADARGSSSSS) the composition is skewed to low complexity. Disordered regions lie at residues 1-30 (MADARGSSSSSGDGGGGEGKGGAGHGDFVG) and 225-285 (SSSH…MNQN). The span at 12–30 (GDGGGGEGKGGAGHGDFVG) shows a compositional bias: gly residues. Positions 258–269 (RRSDMESEKNDD) are enriched in basic and acidic residues. Residues 272–285 (DQTPVSEPPSMNQN) are compositionally biased toward polar residues. A DNA-binding region (TF-B3) is located at residues 302–404 (LRKELTNSDV…KFVVRGEKAI (103 aa)).

It is found in the nucleus. The protein is Putative B3 domain-containing protein Os04g0676650 of Oryza sativa subsp. japonica (Rice).